We begin with the raw amino-acid sequence, 555 residues long: Formate--tetrahydrofolate ligase (555 aa).

64 to 71 lines the ATP pocket; it reads TPAGEGKT.

This sequence belongs to the formate--tetrahydrofolate ligase family.

It carries out the reaction (6S)-5,6,7,8-tetrahydrofolate + formate + ATP = (6R)-10-formyltetrahydrofolate + ADP + phosphate. It functions in the pathway one-carbon metabolism; tetrahydrofolate interconversion. This chain is Formate--tetrahydrofolate ligase, found in Allorhizobium ampelinum (strain ATCC BAA-846 / DSM 112012 / S4) (Agrobacterium vitis (strain S4)).